The sequence spans 578 residues: MKEIAMRNSKRKPEPTPFAGKKLRSTRLRRKRAQISPVLVQSPLWSKQIGVSAASVDSCSDLLADDNVSCGSSRVEKSSNPKKTLIEEVEVSKPGYNVKETIGDSKFRRITRSYSKLHKEKEGDEIEVSESSCVDSNSGAGLRRLNVKGNKINDNDEISFSRSDVTFAGHVSNSRSLNFESENKESDVVSVISGVEYCSKFGSVTGGADNEEIEISKPSSFVEADSSLGSAKELKPELEIVGCVSDLACSEKFSEEVSDSLDDESSEQRSEIYSQYSDFDYSDYTPSIFFDSGSEFSEKSSSDSPISHSRSLYLQFKEQFCRSTIPNDFGSSCEEEIHSELLRFDDEEVEESYLRLRERERSHAYMRDCAKAYCSRMDNTGLIPRLRSIMVQWIVKQCSDMGLQQETLFLGVGLLDRFLSKGSFKSERTLILVGIASLTLATRIEENQPYNSIRKRNFTIQNLRYSRHEVVAMEWLVQEVLNFKCFTPTIFNFLWFYLKAARANPEVERKAKSLAVTSLSDQTQLCFWPSTVAAALVVLACIEHNKISAYQRVIKVHVRTTDNELPECVKSLDWLLGQ.

The tract at residues 1–31 (MKEIAMRNSKRKPEPTPFAGKKLRSTRLRRK) is disordered. Residues 21–31 (KKLRSTRLRRK) are compositionally biased toward basic residues.

Belongs to the cyclin family. As to quaternary structure, may interact with CDKA-1 and CDKB1-1.

In terms of biological role, meiosis-specific cyclin. Required for normal homolog synapsis and recombination in early to mid-prophase 1. May regulate the timing of sister chromatid separation. The polypeptide is Cyclin-SDS (SDS) (Arabidopsis thaliana (Mouse-ear cress)).